We begin with the raw amino-acid sequence, 89 residues long: Elongation factor 1-beta (89 aa).

Belongs to the EF-1-beta/EF-1-delta family.

Its function is as follows. Promotes the exchange of GDP for GTP in EF-1-alpha/GDP, thus allowing the regeneration of EF-1-alpha/GTP that could then be used to form the ternary complex EF-1-alpha/GTP/AAtRNA. The protein is Elongation factor 1-beta (ef1b) of Methanothermobacter thermautotrophicus (strain ATCC 29096 / DSM 1053 / JCM 10044 / NBRC 100330 / Delta H) (Methanobacterium thermoautotrophicum).